A 77-amino-acid chain; its full sequence is NADH-ubiquinone oxidoreductase chain 4L (77 aa).

A run of 2 helical transmembrane segments spans residues 15 to 37 (WQRLIFILISLEFMMLSLFLKFS) and 44 to 64 (MFFYFMCFSVISSILGMVVMV).

Belongs to the complex I subunit 4L family.

The protein localises to the mitochondrion membrane. It catalyses the reaction a ubiquinone + NADH + 5 H(+)(in) = a ubiquinol + NAD(+) + 4 H(+)(out). Functionally, core subunit of the mitochondrial membrane respiratory chain NADH dehydrogenase (Complex I) that is believed to belong to the minimal assembly required for catalysis. Complex I functions in the transfer of electrons from NADH to the respiratory chain. The immediate electron acceptor for the enzyme is believed to be ubiquinone. This chain is NADH-ubiquinone oxidoreductase chain 4L, found in Caenorhabditis elegans.